Here is a 275-residue protein sequence, read N- to C-terminus: Dermonecrotic toxin LamSicTox-alphaIV1i (275 aa).

The active site involves H5. 2 residues coordinate Mg(2+): E25 and D27. Residue H41 is the Nucleophile of the active site. 2 cysteine pairs are disulfide-bonded: C45–C51 and C47–C192. D85 provides a ligand contact to Mg(2+).

The protein belongs to the arthropod phospholipase D family. Class II subfamily. Mg(2+) is required as a cofactor. Expressed by the venom gland.

The protein resides in the secreted. It carries out the reaction an N-(acyl)-sphingosylphosphocholine = an N-(acyl)-sphingosyl-1,3-cyclic phosphate + choline. It catalyses the reaction an N-(acyl)-sphingosylphosphoethanolamine = an N-(acyl)-sphingosyl-1,3-cyclic phosphate + ethanolamine. The catalysed reaction is a 1-acyl-sn-glycero-3-phosphocholine = a 1-acyl-sn-glycero-2,3-cyclic phosphate + choline. The enzyme catalyses a 1-acyl-sn-glycero-3-phosphoethanolamine = a 1-acyl-sn-glycero-2,3-cyclic phosphate + ethanolamine. Functionally, dermonecrotic toxins cleave the phosphodiester linkage between the phosphate and headgroup of certain phospholipids (sphingolipid and lysolipid substrates), forming an alcohol (often choline) and a cyclic phosphate. This toxin acts on sphingomyelin (SM). It may also act on ceramide phosphoethanolamine (CPE), lysophosphatidylcholine (LPC) and lysophosphatidylethanolamine (LPE), but not on lysophosphatidylserine (LPS), and lysophosphatidylglycerol (LPG). It acts by transphosphatidylation, releasing exclusively cyclic phosphate products as second products. Induces dermonecrosis, hemolysis, increased vascular permeability, edema, inflammatory response, and platelet aggregation. This is Dermonecrotic toxin LamSicTox-alphaIV1i from Loxosceles amazonica (Recluse spider).